A 145-amino-acid chain; its full sequence is Large ribosomal subunit protein uL16 (145 aa).

Belongs to the universal ribosomal protein uL16 family. Part of the 50S ribosomal subunit.

Its function is as follows. Binds 23S rRNA and is also seen to make contacts with the A and possibly P site tRNAs. The chain is Large ribosomal subunit protein uL16 from Desulfitobacterium hafniense (strain DSM 10664 / DCB-2).